The sequence spans 481 residues: UDP-glucose 6-dehydrogenase 1 (481 aa).

NAD(+)-binding positions include 8 to 13 (GAGYVG), Asp-33, Arg-38, 86 to 90 (VNTPT), 127 to 128 (ST), and Glu-161. Residues 157 to 161 (EFLAE), 216 to 223 (KLAANAFL), and 256 to 269 (RIGP…VGFG) each bind substrate. The active-site Nucleophile is Cys-272. NAD(+) is bound at residue 272-275 (CFQK). 334–335 (FK) contacts substrate. Residue Arg-342 participates in NAD(+) binding. Arg-448 provides a ligand contact to substrate.

This sequence belongs to the UDP-glucose/GDP-mannose dehydrogenase family.

The enzyme catalyses UDP-alpha-D-glucose + 2 NAD(+) + H2O = UDP-alpha-D-glucuronate + 2 NADH + 3 H(+). Its pathway is nucleotide-sugar biosynthesis; UDP-alpha-D-glucuronate biosynthesis; UDP-alpha-D-glucuronate from UDP-alpha-D-glucose: step 1/1. Its activity is regulated as follows. Inhibited by UDP-xylose. Its function is as follows. Involved in the biosynthesis of UDP-glucuronic acid (UDP-GlcA), providing nucleotide sugars for cell-wall polymers. This Arabidopsis thaliana (Mouse-ear cress) protein is UDP-glucose 6-dehydrogenase 1 (UGD1).